The primary structure comprises 121 residues: Large ribosomal subunit protein bL31 (121 aa).

Residues 1 to 97 (MKEGIHPDYK…AKENRAAKRA (97 aa)) are large ribosomal subunit protein bL31. Zn(2+)-binding residues include cysteine 16, cysteine 18, cysteine 36, and cysteine 39. Residues 65–80 (ATPAKAEPAKKAPAAE) show a composition bias toward low complexity. A disordered region spans residues 65–121 (ATPAKAEPAKKAPAAEPAKKVEAAKENRAAKRAKAGKSKKSEAAPAAEAPAADAKPE). The unknown stretch occupies residues 74–121 (KKAPAAEPAKKVEAAKENRAAKRAKAGKSKKSEAAPAAEAPAADAKPE). Residues 81-93 (PAKKVEAAKENRA) show a composition bias toward basic and acidic residues. Residues 107-121 (AAPAAEAPAADAKPE) show a composition bias toward low complexity.

The protein belongs to the bacterial ribosomal protein bL31 family. Type A subfamily. Part of the 50S ribosomal subunit. The cofactor is Zn(2+).

Functionally, binds the 23S rRNA. In Anaeromyxobacter dehalogenans (strain 2CP-C), this protein is Large ribosomal subunit protein bL31.